The chain runs to 20 residues: Beta-1,3-glucan-binding protein 2 (20 aa).

Belongs to the insect beta-1,3-glucan binding protein family. In terms of assembly, monomer.

Its subcellular location is the secreted. Its function is as follows. Involved in the recognition of invading microorganisms causing their aggregation. Activates the phenoloxidase cascade. Binds specifically to beta-1,3-glucan. Binds the A.niger cell wall component alpha-1,3-glucan, a fungal pathogen-associated molecular pattern (PAMP) that activates the host immune response. This Galleria mellonella (Greater wax moth) protein is Beta-1,3-glucan-binding protein 2.